The primary structure comprises 500 residues: Phenylalanine--tRNA ligase alpha subunit (500 aa).

L-phenylalanine is bound by residues threonine 343, 382–384, and phenylalanine 423; that span reads QVD. Glutamate 425 provides a ligand contact to Mg(2+). Phenylalanine 448 lines the L-phenylalanine pocket.

This sequence belongs to the class-II aminoacyl-tRNA synthetase family. Phe-tRNA synthetase alpha subunit type 2 subfamily. In terms of assembly, tetramer of two alpha and two beta subunits. Mg(2+) serves as cofactor.

The protein resides in the cytoplasm. The catalysed reaction is tRNA(Phe) + L-phenylalanine + ATP = L-phenylalanyl-tRNA(Phe) + AMP + diphosphate + H(+). The polypeptide is Phenylalanine--tRNA ligase alpha subunit (Thermococcus onnurineus (strain NA1)).